The sequence spans 3432 residues: Genome polyprotein (3432 aa).

Residues 2-15 (TKKPGGPGKNRAIN) form an interaction with host EXOC1 region. The Cytoplasmic segment spans residues 2-109 (TKKPGGPGKN…RKQNKRGGNE (108 aa)). A hydrophobic; homodimerization of capsid protein C region spans residues 37-72 (LLDGRGPVRFVLALITFFKFTALAPTKALLGRWKAV). Positions 106–127 (GGNEGSIMWLASLAVVIACAGA) are cleaved as a propeptide — ER anchor for the capsid protein C, removed in mature form by serine protease NS3. The helical transmembrane segment at 110–130 (GSIMWLASLAVVIACAGAMKL) threads the bilayer. Residues 131 to 253 (SNFQGKLLMT…ATRYLMKTEN (123 aa)) lie on the Extracellular side of the membrane. Residue Asn-142 is glycosylated (N-linked (GlcNAc...) asparagine; by host). A helical membrane pass occupies residues 254–274 (WIIRNPGYAFLAAVLGWMLGS). The Cytoplasmic portion of the chain corresponds to 275–279 (NNGQR). Residues 280 to 294 (VVFTILLLLVAPAYS) form a helical membrane-spanning segment. Over 295-746 (FNCLGMGNRD…QVFGGAFRTL (452 aa)) the chain is Extracellular. Disulfide bonds link Cys-297/Cys-324, Cys-354/Cys-410, Cys-354/Cys-415, Cys-368/Cys-399, Cys-386/Cys-410, and Cys-386/Cys-415. Residues 392 to 405 (DRGWGNGCGLFGKG) form a fusion peptide region. A glycan (N-linked (GlcNAc...) asparagine; by host) is linked at Asn-448. 2 disulfide bridges follow: Cys-484-Cys-581 and Cys-598-Cys-629. The chain crosses the membrane as a helical span at residues 747–767 (FGGMSWITQGLMGALLLWMGV). The Cytoplasmic segment spans residues 768–773 (NARDRS). A helical membrane pass occupies residues 774 to 794 (IALAFLATGGVLVFLATNVHA). Residues 795-1219 (DTGCAIDITR…AFAEANSGGD (425 aa)) lie on the Extracellular side of the membrane. 6 disulfide bridges follow: Cys-798/Cys-809, Cys-849/Cys-937, Cys-973/Cys-1017, Cys-1074/Cys-1123, Cys-1085/Cys-1106, and Cys-1107/Cys-1110. Asn-924 and Asn-1001 each carry an N-linked (GlcNAc...) asparagine; by host glycan. Residues 1220 to 1240 (VLHLALIAVFKIQPAFLVMNM) form a helical membrane-spanning segment. The Cytoplasmic portion of the chain corresponds to 1241–1250 (LSTRWTNQEN). The helical transmembrane segment at 1251–1271 (VILVLGAAFFQLASVDLQIGV) threads the bilayer. Residue His-1272 is a topological domain, lumenal. Residues 1273 to 1293 (GILNAAAIAWMIVRAITFPTT) traverse the membrane as a helical segment. Over 1294 to 1309 (SSVTMPVLALLTPGMR) the chain is Cytoplasmic. The chain crosses the membrane as a helical span at residues 1310–1330 (ALYLDTYRIILLVIGICSLLH). The Lumenal portion of the chain corresponds to 1331–1341 (ERKKTMAKKKG). The helical transmembrane segment at 1342-1362 (AVLLGLALTSTGWFSPTTIAA) threads the bilayer. Over 1363-1374 (GLMVCNPNKKRG) the chain is Cytoplasmic. 2 interaction with human SPCS1 regions span residues 1374-1423 (GWPA…GKAT) and 1458-1505 (FHLI…TKRG). The chain crosses the membrane as a helical span at residues 1375–1395 (WPATEFLSAVGLMFAIVGGLA). Topologically, residues 1396-1398 (ELD) are lumenal. A helical transmembrane segment spans residues 1399–1419 (IESMSIPFMLAGLMAVSYVVS). The Cytoplasmic portion of the chain corresponds to 1420–1476 (GKATDMWLERAADISWEMDAAITGSSRRLDVKLDDDGDFHLIDDPGVPWKVWVLRMS). Residues 1427-1466 (LERAADISWEMDAAITGSSRRLDVKLDDDGDFHLIDDPGV) are interacts with and activates NS3 protease. Residues 1477–1497 (CIGLAALTPWAIVPAAFGYWL) constitute an intramembrane region (helical). Residues 1498-2173 (TLKTTKRGGV…RMALEELPDA (676 aa)) lie on the Cytoplasmic side of the membrane. A Peptidase S7 domain is found at 1505–1682 (GGVFWDTPSP…DRQEEPVPEA (178 aa)). Active-site charge relay system; for serine protease NS3 activity residues include His-1555, Asp-1579, and Ser-1639. One can recognise a Helicase ATP-binding domain in the interval 1685 to 1841 (PNMLRKRQMT…DSNAPIHDLQ (157 aa)). Residues 1689–1692 (RKRQ) form an important for RNA-binding region. 1698-1705 (LHPGSGKT) provides a ligand contact to ATP. The DEAH box signature appears at 1789–1792 (DEAH). One can recognise a Helicase C-terminal domain in the interval 1852–2017 (GYEWITEYAG…GLVAQLYGPE (166 aa)). N6-acetyllysine; by host is present on Lys-1893. A disordered region spans residues 1950 to 1972 (NPSPITSASAAQRRGRVGRNPNQ). The interval 2168-2172 (EELPD) is regulates the ATPase activity of NS3 helicase. The chain crosses the membrane as a helical span at residues 2174–2194 (LETITLIVAITVMTGGFFLLM). Residues 2195-2199 (MQRKG) lie on the Lumenal side of the membrane. The helical intramembrane region spans 2200 to 2220 (IGKMGLGALVLTLATFFLWAA). Glu-2221 is a topological domain (lumenal). Residues 2222–2242 (VPGTKIAGTLLIALLLMVVLI) traverse the membrane as a helical segment. Topologically, residues 2243–2257 (PEPEKQRSQTDNQLA) are cytoplasmic. A helical transmembrane segment spans residues 2258–2278 (VFLICVLTVVGVVAANEYGML). Topologically, residues 2279–2311 (EKTKADLKSMFGGKTQASGLTGLPSMALDLRPA) are lumenal. The segment at residues 2312-2332 (TAWALYGGSTVVLTPLLKHLI) is an intramembrane region (helical). At 2333 to 2368 (TSEYVTTSLASINSQAGSLFVLPRGVPFTDLDLTVG) the chain is on the lumenal side. The helical transmembrane segment at 2369–2389 (LVFLGCWGQITLTTFLTAMVL) threads the bilayer. Residues 2390–2444 (ATLHYGYMLPGWQAEALRAAQRRTAAGIMKNAVVDGMVATDVPELERTTPLMQKK) lie on the Cytoplasmic side of the membrane. Residues 2445 to 2465 (VGQVLLIGVSVAAFLVNPNVT) form a helical membrane-spanning segment. The Lumenal portion of the chain corresponds to 2466 to 2469 (TVRE). A helical membrane pass occupies residues 2470-2490 (AGVLVTAATLTLWDNGASAVW). Topologically, residues 2491-3432 (NSTTATGLCH…DVLIQEDRVI (942 aa)) are cytoplasmic. One can recognise an mRNA cap 0-1 NS5-type MT domain in the interval 2528–2793 (GRPGGRTLGE…DVNLGSGTRA (266 aa)). Ser-2583 contacts S-adenosyl-L-methionine. Ser-2583 is modified (phosphoserine). Lys-2588 functions as the For 2'-O-MTase activity in the catalytic mechanism. S-adenosyl-L-methionine-binding residues include Gly-2613, Trp-2614, Thr-2631, Lys-2632, Asp-2658, and Val-2659. Asp-2673 (for 2'-O-MTase activity) is an active-site residue. Ile-2674 provides a ligand contact to S-adenosyl-L-methionine. Active-site for 2'-O-MTase activity residues include Lys-2709 and Glu-2745. An S-adenosyl-L-methionine-binding site is contributed by Tyr-2747. Glu-2967, His-2971, Cys-2976, and Cys-2979 together coordinate Zn(2+). The RdRp catalytic domain occupies 3057 to 3209 (GKMYADDTAG…KPLDDRFATA (153 aa)). Zn(2+) contacts are provided by His-3244, Cys-3260, and Cys-3379.

In the N-terminal section; belongs to the class I-like SAM-binding methyltransferase superfamily. mRNA cap 0-1 NS5-type methyltransferase family. Homodimer. Interacts (via N-terminus) with host EXOC1 (via C-terminus); this interaction results in EXOC1 degradation through the proteasome degradation pathway. In terms of assembly, forms heterodimers with envelope protein E in the endoplasmic reticulum and Golgi. As to quaternary structure, homodimer; in the endoplasmic reticulum and Golgi. Interacts with protein prM. Interacts with non-structural protein 1. Interacts with host HSPA5. Homodimer; Homohexamer when secreted. Interacts with envelope protein E. NS1 interacts with NS4B. Interacts with host complement protein CFH; this interaction leads to the degradation of C3. In terms of assembly, interacts (via N-terminus) with serine protease NS3. As to quaternary structure, forms a heterodimer with serine protease NS3. May form homooligomers. Interacts with human SPCS1. Forms a heterodimer with NS2B. Interacts with non-structural protein 2A (via N-terminus). Interacts with NS4B. Interacts with unphosphorylated RNA-directed RNA polymerase NS5; this interaction stimulates RNA-directed RNA polymerase NS5 guanylyltransferase activity. Interacts with host ILF2. In terms of assembly, interacts with serine protease NS3. As to quaternary structure, homodimer. Interacts with host STAT2; this interaction inhibits the phosphorylation of the latter, and, when all viral proteins are present (polyprotein), targets STAT2 for degradation. Interacts with serine protease NS3. Mn(2+) is required as a cofactor. It depends on Mg(2+) as a cofactor. Post-translationally, specific enzymatic cleavages in vivo yield mature proteins. Cleavages in the lumen of endoplasmic reticulum are performed by host signal peptidase, whereas cleavages in the cytoplasmic side are performed by serine protease NS3. Signal cleavage at the 2K-4B site requires a prior NS3 protease-mediated cleavage at the 4A-2K site. Cleaved in post-Golgi vesicles by a host furin, releasing the mature small envelope protein M, and peptide pr. This cleavage is incomplete as up to 30% of viral particles still carry uncleaved prM. In terms of processing, N-glycosylated. Post-translationally, N-glycosylated. The excreted form is glycosylated and this is required for efficient secretion of the protein from infected cells. Acetylated by host KAT5. Acetylation modulates NS3 RNA-binding and unwinding activities and plays an important positive role for viral replication. In terms of processing, phosphorylated on serines residues. This phosphorylation may trigger NS5 nuclear localization.

It localises to the host endoplasmic reticulum membrane. The protein localises to the virion. Its subcellular location is the host nucleus. It is found in the host cytoplasm. The protein resides in the host perinuclear region. It localises to the secreted. The protein localises to the virion membrane. Its subcellular location is the host cell surface. It carries out the reaction Selective hydrolysis of -Xaa-Xaa-|-Yaa- bonds in which each of the Xaa can be either Arg or Lys and Yaa can be either Ser or Ala.. It catalyses the reaction RNA(n) + a ribonucleoside 5'-triphosphate = RNA(n+1) + diphosphate. The catalysed reaction is a ribonucleoside 5'-triphosphate + H2O = a ribonucleoside 5'-diphosphate + phosphate + H(+). The enzyme catalyses ATP + H2O = ADP + phosphate + H(+). It carries out the reaction a 5'-end (5'-triphosphoguanosine)-ribonucleoside in mRNA + S-adenosyl-L-methionine = a 5'-end (N(7)-methyl 5'-triphosphoguanosine)-ribonucleoside in mRNA + S-adenosyl-L-homocysteine. It catalyses the reaction a 5'-end (N(7)-methyl 5'-triphosphoguanosine)-ribonucleoside in mRNA + S-adenosyl-L-methionine = a 5'-end (N(7)-methyl 5'-triphosphoguanosine)-(2'-O-methyl-ribonucleoside) in mRNA + S-adenosyl-L-homocysteine + H(+). Plays a role in virus budding by binding to the cell membrane and gathering the viral RNA into a nucleocapsid that forms the core of a mature virus particle. During virus entry, may induce genome penetration into the host cytoplasm after hemifusion induced by the surface proteins. Can migrate to the cell nucleus where it modulates host functions. Overcomes the anti-viral effects of host EXOC1 by sequestering and degrading the latter through the proteasome degradation pathway. In terms of biological role, inhibits RNA silencing by interfering with host Dicer. Functionally, prevents premature fusion activity of envelope proteins in trans-Golgi by binding to envelope protein E at pH 6.0. After virion release in extracellular space, gets dissociated from E dimers. Its function is as follows. Acts as a chaperone for envelope protein E during intracellular virion assembly by masking and inactivating envelope protein E fusion peptide. prM is the only viral peptide matured by host furin in the trans-Golgi network probably to avoid catastrophic activation of the viral fusion activity in acidic Golgi compartment prior to virion release. prM-E cleavage is inefficient, and many virions are only partially matured. These uncleaved prM would play a role in immune evasion. May play a role in virus budding. Exerts cytotoxic effects by activating a mitochondrial apoptotic pathway through M ectodomain. May display a viroporin activity. In terms of biological role, binds to host cell surface receptor and mediates fusion between viral and cellular membranes. Efficient virus attachment to cell is, at least in part, mediated by host HSPA5. Envelope protein is synthesized in the endoplasmic reticulum in the form of heterodimer with protein prM. They play a role in virion budding in the ER, and the newly formed immature particle is covered with 60 spikes composed of heterodimer between precursor prM and envelope protein E. The virion is transported to the Golgi apparatus where the low pH causes dissociation of PrM-E heterodimers and formation of E homodimers. prM-E cleavage is inefficient, and many virions are only partially matured. These uncleaved prM would play a role in immune evasion. Functionally, involved in immune evasion, pathogenesis and viral replication. Once cleaved off the polyprotein, is targeted to three destinations: the viral replication cycle, the plasma membrane and the extracellular compartment. Essential for viral replication. Required for formation of the replication complex and recruitment of other non-structural proteins to the ER-derived membrane structures. Excreted as a hexameric lipoparticle that plays a role against host immune response. Antagonizing the complement function. Binds to the host macrophages and dendritic cells. Inhibits signal transduction originating from Toll-like receptor 3 (TLR3). Its function is as follows. Component of the viral RNA replication complex that functions in virion assembly and antagonizes the host alpha/beta interferon antiviral response. Required cofactor for the serine protease function of NS3. May have membrane-destabilizing activity and form viroporins. In terms of biological role, displays three enzymatic activities: serine protease, NTPase and RNA helicase. NS3 serine protease, in association with NS2B, performs its autocleavage and cleaves the polyprotein at dibasic sites in the cytoplasm: C-prM, NS2A-NS2B, NS2B-NS3, NS3-NS4A, NS4A-2K and NS4B-NS5. NS3 RNA helicase binds RNA and unwinds dsRNA in the 3' to 5' direction. Functionally, regulates the ATPase activity of the NS3 helicase activity. NS4A allows NS3 helicase to conserve energy during unwinding. Its function is as follows. Functions as a signal peptide for NS4B and is required for the interferon antagonism activity of the latter. Induces the formation of ER-derived membrane vesicles where the viral replication takes place. Inhibits interferon (IFN)-induced host STAT1 phosphorylation and nuclear translocation, thereby preventing the establishment of cellular antiviral state by blocking the IFN-alpha/beta pathway. Inhibits STAT2 translocation in the nucleus after IFN-alpha treatment. In terms of biological role, replicates the viral (+) and (-) RNA genome. Performs the capping of genomes in the cytoplasm. NS5 methylates viral RNA cap at guanine N-7 and ribose 2'-O positions. Besides its role in RNA genome replication, also prevents the establishment of cellular antiviral state by blocking the interferon-alpha/beta (IFN-alpha/beta) signaling pathway. Inhibits host TYK2 and STAT2 phosphorylation, thereby preventing activation of JAK-STAT signaling pathway. The sequence is that of Genome polyprotein from Japanese encephalitis virus (strain SA-14) (JEV).